The primary structure comprises 193 residues: Peptidyl-tRNA hydrolase (193 aa).

A tRNA-binding site is contributed by Y15. H20 (proton acceptor) is an active-site residue. TRNA is bound by residues F65, N67, and N113.

This sequence belongs to the PTH family. As to quaternary structure, monomer.

It is found in the cytoplasm. The catalysed reaction is an N-acyl-L-alpha-aminoacyl-tRNA + H2O = an N-acyl-L-amino acid + a tRNA + H(+). Hydrolyzes ribosome-free peptidyl-tRNAs (with 1 or more amino acids incorporated), which drop off the ribosome during protein synthesis, or as a result of ribosome stalling. Its function is as follows. Catalyzes the release of premature peptidyl moieties from peptidyl-tRNA molecules trapped in stalled 50S ribosomal subunits, and thus maintains levels of free tRNAs and 50S ribosomes. The chain is Peptidyl-tRNA hydrolase from Ehrlichia canis (strain Jake).